The sequence spans 284 residues: Tropomyosin (284 aa).

An N-acetylmethionine modification is found at Met-1. Positions 1 to 42 (MDAIKKKMQAMKLEKDNAMDRADTLEQQNKEANNRAEKSEEE) are disordered. A coiled-coil region spans residues 1-284 (MDAIKKKMQA…DQTFSELSGY (284 aa)). Residues 12-38 (KLEKDNAMDRADTLEQQNKEANNRAEK) show a composition bias toward basic and acidic residues.

It belongs to the tropomyosin family. As to quaternary structure, homodimer.

Functionally, tropomyosin, in association with the troponin complex, plays a central role in the calcium dependent regulation of muscle contraction. The sequence is that of Tropomyosin from Pandalus borealis (Northern red shrimp).